A 263-amino-acid chain; its full sequence is Chorismate mutase 2 (263 aa).

The region spanning Cys-3 to Asp-256 is the Chorismate mutase domain.

In terms of assembly, homodimer. As to expression, expressed in root, stem, stigma, anther, leaf, petal tube, petal limb and sepal tissues with highest levels in petal tubes and stems.

Its subcellular location is the cytoplasm. It localises to the cytosol. The enzyme catalyses chorismate = prephenate. It functions in the pathway metabolic intermediate biosynthesis; prephenate biosynthesis; prephenate from chorismate: step 1/1. Its activity is regulated as follows. No allosteric regulation. Mediates the conversion of chorismate to prephenate. The protein is Chorismate mutase 2 of Petunia hybrida (Petunia).